The following is a 181-amino-acid chain: High mobility group protein B4 (181 aa).

A DNA-binding region (HMG box 1) is located at residues 9-79; sequence PKVNVSSYIH…RYQQEMMNYI (71 aa). Positions 80-89 are enriched in basic residues; that stretch reads GKRRKRRKRD. The interval 80-100 is disordered; that stretch reads GKRRKRRKRDPKAPRKPPSSF. The HMG box 2 DNA-binding region spans 93–161; it reads PRKPPSSFLL…KYFEEQEAYR (69 aa).

This sequence belongs to the HMGB family. In terms of tissue distribution, expressed in adult germ cells (at protein level).

The protein resides in the nucleus. It is found in the chromosome. The protein is High mobility group protein B4 (Hmgb4) of Mus musculus (Mouse).